The sequence spans 614 residues: Type VII secretion system protein EssD (614 aa).

The segment at 417–445 (QNHVTHGPKDSMVRSEGKHSISSHEMNSS) is disordered. Residues 423 to 435 (GPKDSMVRSEGKH) are compositionally biased toward basic and acidic residues.

This sequence belongs to the EssD family. In terms of assembly, interacts (via C-terminal) with EssG; this interaction blocks EssD activity. Interacts with EssE.

Its subcellular location is the secreted. It is found in the cell membrane. Component of the type VII secretion system (Ess). Plays a role in Ess secretion during infection. Required for the efficient secretion of EsxA. Required for abscess formation and staphylococcal persistence in host tissues. Possesses a toxic DNase activity that is modulated by EsaG by forming a nuclease toxin-antitoxin pair. This nuclease toxin targets competitor bacteria. This is Type VII secretion system protein EssD from Staphylococcus aureus (strain USA300).